A 97-amino-acid polypeptide reads, in one-letter code: uncharacterized protein (97 aa).

Over residues 1-24 (MTQKNGADRPDDYKRFSSLDKEYD) the composition is skewed to basic and acidic residues. The disordered stretch occupies residues 1 to 97 (MTQKNGADRP…FEGTIDQNLD (97 aa)). Residues 31–43 (SNTETESVNTETQ) are compositionally biased toward low complexity. A compositionally biased stretch (basic and acidic residues) spans 44–53 (THNKENKNDT).

This is an uncharacterized protein from Bacillus subtilis (strain 168).